The primary structure comprises 481 residues: RAC-beta serine/threonine-protein kinase (481 aa).

Met-1 is subject to N-acetylmethionine. One can recognise a PH domain in the interval 5–108; sequence SVIKEGWLHK…WIRAIQMVAN (104 aa). Ser-34 bears the Phosphoserine mark. A disulfide bridge links Cys-60 with Cys-77. Ser-126 is modified (phosphoserine). Ser-128 and Ser-131 each carry an O-linked (GlcNAc) serine glycan. One can recognise a Protein kinase domain in the interval 152–409; the sequence is FDYLKLLGKG…AKEVMEHRFF (258 aa). ATP-binding positions include 158-166 and Lys-181; that span reads LGKGTFGKV. Asp-275 (proton acceptor) is an active-site residue. Mn(2+)-binding residues include Asn-280 and Asp-293. Thr-306 carries an O-linked (GlcNAc) threonine glycan. Phosphothreonine; by PDPK1 is present on Thr-309. Thr-313 carries an O-linked (GlcNAc) threonine glycan. An AGC-kinase C-terminal domain is found at 410–481; sequence LSINWQDVVQ…QFSYSASIRE (72 aa). Ser-447 is modified (phosphoserine). Thr-451 carries the post-translational modification Phosphothreonine. A phosphoserine mark is found at Ser-461, Ser-474, and Ser-478. O-linked (GlcNAc) serine; alternate glycosylation occurs at Ser-474.

Belongs to the protein kinase superfamily. AGC Ser/Thr protein kinase family. RAC subfamily. Interacts with BTBD10. Interacts with KCTD20. Interacts (via PH domain) with MTCP1, TCL1A and TCL1B; this interaction may facilitate AKT2 oligomerization and phosphorylation, hence increasing kinase activity. Interacts with PHB2; this interaction may be important for myogenic differentiation. Interacts (when phosphorylated) with CLIP3; this interaction promotes cell membrane localization. Interacts with WDFY2 (via WD repeats 1-3). Phosphorylation on Thr-309 and Ser-474 is required for full activity. Phosphorylation of the activation loop at Thr-309 by PDPK1/PDK1 is a prerequisite for full activation. Phosphorylated and activated by PDPK1/PDK1 in the presence of phosphatidylinositol 3,4,5-trisphosphate. Phosphorylation by mTORC2 in response to growth factors plays a key role in AKT1 activation: mTORC2 phosphorylates different sites depending on the context, such as Ser-474 or Ser-478, thereby facilitating subsequent phosphorylation of the activation loop by PDPK1/PDK1. In terms of processing, ubiquitinated; undergoes both 'Lys-48'- and 'Lys-63'-linked polyubiquitination. TRAF6-induced 'Lys-63'-linked AKT2 ubiquitination. When fully phosphorylated and translocated into the nucleus, undergoes 'Lys-48'-polyubiquitination catalyzed by TTC3, leading to its degradation by the proteasome. Post-translationally, O-GlcNAcylation at Thr-306 and Thr-313 inhibits activating phosphorylation at Thr-309 via disrupting the interaction between AKT and PDPK1/PDK1. In terms of tissue distribution, expressed in adipocytes and hepatocytes (at protein level). Expressed at low levels in skeletal muscle (at protein level).

The protein localises to the cytoplasm. It is found in the nucleus. Its subcellular location is the cell membrane. The protein resides in the early endosome. The enzyme catalyses L-seryl-[protein] + ATP = O-phospho-L-seryl-[protein] + ADP + H(+). It carries out the reaction L-threonyl-[protein] + ATP = O-phospho-L-threonyl-[protein] + ADP + H(+). Phosphorylation at Thr-309 (in the kinase domain) and Ser-474 (in the C-terminal regulatory region) is required for full activation. In adipocytes and hepatocytes, the activation is induced by insulin. AKT2 phosphorylation of PKP1 is induced by insulin. Functionally, serine/threonine kinase closely related to AKT1 and AKT3. All 3 enzymes, AKT1, AKT2 and AKT3, are collectively known as AKT kinase. AKT regulates many processes including metabolism, proliferation, cell survival, growth and angiogenesis, through the phosphorylation of a range of downstream substrates. Over 100 substrates have been reported so far, although for most of them, the precise AKT kinase catalyzing the reaction was not specified. AKT regulates glucose uptake by mediating insulin-induced translocation of the SLC2A4/GLUT4 glucose transporter to the cell surface. Phosphorylation of PTPN1 at 'Ser-50' negatively modulates its phosphatase activity preventing dephosphorylation of the insulin receptor and the attenuation of insulin signaling. Phosphorylation of TBC1D4 triggers the binding of this effector to inhibitory 14-3-3 proteins, which is required for insulin-stimulated glucose transport. AKT also regulates the storage of glucose in the form of glycogen by phosphorylating GSK3A at 'Ser-21' and GSK3B at 'Ser-9', resulting in inhibition of its kinase activity. Phosphorylation of GSK3 isoforms by AKT is also thought to be one mechanism by which cell proliferation is driven. AKT also regulates cell survival via the phosphorylation of MAP3K5 (apoptosis signal-related kinase). Phosphorylation of 'Ser-83' decreases MAP3K5 kinase activity stimulated by oxidative stress and thereby prevents apoptosis. AKT mediates insulin-stimulated protein synthesis by phosphorylating TSC2 at 'Ser-939' and 'Thr-1462', thereby activating mTORC1 signaling and leading to both phosphorylation of 4E-BP1 and in activation of RPS6KB1. AKT is involved in the phosphorylation of members of the FOXO factors (Forkhead family of transcription factors), leading to binding of 14-3-3 proteins and cytoplasmic localization. In particular, FOXO1 is phosphorylated at 'Thr-24', 'Ser-256' and 'Ser-319'. FOXO3 and FOXO4 are phosphorylated on equivalent sites. AKT has an important role in the regulation of NF-kappa-B-dependent gene transcription and positively regulates the activity of CREB1 (cyclic AMP (cAMP)-response element binding protein). The phosphorylation of CREB1 induces the binding of accessory proteins that are necessary for the transcription of pro-survival genes such as BCL2 and MCL1. AKT phosphorylates 'Ser-454' on ATP citrate lyase (ACLY), thereby potentially regulating ACLY activity and fatty acid synthesis. Activates the 3B isoform of cyclic nucleotide phosphodiesterase (PDE3B) via phosphorylation of 'Ser-273', resulting in reduced cyclic AMP levels and inhibition of lipolysis. Phosphorylates PIKFYVE on 'Ser-318', which results in increased PI(3)P-5 activity. The Rho GTPase-activating protein DLC1 is another substrate and its phosphorylation is implicated in the regulation cell proliferation and cell growth. AKT plays a role as key modulator of the AKT-mTOR signaling pathway controlling the tempo of the process of newborn neurons integration during adult neurogenesis, including correct neuron positioning, dendritic development and synapse formation. Signals downstream of phosphatidylinositol 3-kinase (PI(3)K) to mediate the effects of various growth factors such as platelet-derived growth factor (PDGF), epidermal growth factor (EGF), insulin and insulin-like growth factor 1 (IGF1). AKT mediates the antiapoptotic effects of IGF1. Essential for the SPATA13-mediated regulation of cell migration and adhesion assembly and disassembly. May be involved in the regulation of the placental development. In response to lysophosphatidic acid stimulation, inhibits the ciliogenesis cascade. In this context, phosphorylates WDR44, hence stabilizing its interaction with Rab11 and preventing the formation of the ciliogenic Rab11-FIP3-RAB3IP complex. Also phosphorylates RAB3IP/Rabin8, thus may affect RAB3IP guanine nucleotide exchange factor (GEF) activity toward Rab8, which is important for cilia growth. Phosphorylates PKP1, facilitating its interaction with YWHAG and translocation to the nucleus, ultimately resulting in a reduction in keratinocyte intercellular adhesion. Phosphorylation of PKP1 increases PKP1 protein stability, translocation to the cytoplasm away from desmosome plaques and PKP1-driven cap-dependent translation. Several AKT2-specific substrates have been identified, including ANKRD2, C2CD5, CLK2 and PITX2. May play a role in myoblast differentiation. In this context, may act through PITX2 phosphorylation. Unphosphorylated PITX2 associates with an ELAVL1/HuR-containing complex, which stabilizes cyclin mRNA and ensuring cell proliferation. Phosphorylation by AKT2 impairs this association, leading to CCND1 mRNA destabilization and progression towards differentiation. Also involved in the negative regulation of myogenesis in response to stress conditions. In this context, acts by phosphorylating ANKRD2. May also be a key regulator of glucose uptake. Regulates insulin-stimulated glucose transport by the increase of glucose transporter GLUT4 translocation from intracellular stores to the plasma membrane. In this context, acts by phosphorylating C2CD5/CDP138 on 'Ser-197' in insulin-stimulated adipocytes. Through the phosphorylation of CLK2 on 'Thr-343', involved in insulin-regulated suppression of hepatic gluconeogenesis. The sequence is that of RAC-beta serine/threonine-protein kinase from Rattus norvegicus (Rat).